The chain runs to 574 residues: MPYSEIEAKFLGPGKELTREPCYKKLKSAVDDGVFPHRGGPDSHRIQEKTKNNRLPVATINFRRRVCPGEDKTSTDVLKPLHKEMPGDKVGGTESIGSQALQDGKPLAPARDDEIYSTSKAFIGPIYKPPEKKKCRERKNETATFNNTDSKRRQEEKQKFNSKKLEIDTELSQFYKEIEELENENEASQGSCKEPEPSQEQTLSHDQACNTLKPEGESKDLSTVLQSHCGYQPYLEDESDYPCDEQLIPAFCDTSFPSFRPEWQSVHPFVIPHDPLPSFNYFNIQRFGAPLHPPPSVFHARDDARLQSGCYIDSYQDGWSCLTLDQNDEYANYDVPGNVHPFGNGYGVQDDSVKNGFCEIRECWQDPSMDMHNEADRFVNQCFQEDRLNKLQKLLILLRGLPGSGKTTLSRILLGQSRDGIVFSTDDYFHHQDGYRYNVNQLGDAHDWNQNRAKQAIDQGRSPVIIDNTNTQAWEMKPYVEMAIGKGYRVEFHEPETWWKFDPEELEKRNKHGVSRKKIAQMLDRYEFQMSISIVMNSVEPTQKSTQTPLPLQGDQRWGGSLGSHSQVSITDDY.

4 disordered regions span residues 82–110, 127–161, 182–204, and 542–574; these read HKEM…LAPA, YKPP…QKFN, ENEN…QTLS, and TQKS…TDDY. Basic and acidic residues-rich tracts occupy residues 129–141 and 149–161; these read PPEK…RKNE and DSKR…QKFN. Residues 162-196 are a coiled coil; the sequence is SKKLEIDTELSQFYKEIEELENENEASQGSCKEPE. Positions 563 to 574 are enriched in polar residues; that stretch reads GSHSQVSITDDY.

This chain is NEDD4-binding protein 2-like 2 (N4bp2l2), found in Rattus norvegicus (Rat).